The primary structure comprises 589 residues: Muscarinic acetylcholine receptor M3 (589 aa).

Residues 1–66 (MTLHSNSTTS…DPLGGHTIWQ (66 aa)) are Extracellular-facing. Asn-6, Asn-15, Asn-41, Asn-48, and Asn-52 each carry an N-linked (GlcNAc...) asparagine glycan. The chain crosses the membrane as a helical span at residues 67 to 90 (VVFIAFLTGFLALVTIIGNILVIV). At 91–103 (AFKVNKQLKTVNN) the chain is on the cytoplasmic side. A helical membrane pass occupies residues 104-129 (YFLLSLACADLIIGVISMNLFTTYII). At 130-141 (MNRWALGNLACD) the chain is on the extracellular side. Residues Cys-140 and Cys-220 are joined by a disulfide bond. The chain crosses the membrane as a helical span at residues 142-163 (LWLSIDYVASNASVMNLLVISF). At 164-183 (DRYFSITRPLTYRAKRTTKR) the chain is on the cytoplasmic side. Residues 184–205 (AGVMIGLAWVISFVLWAPAILF) form a helical membrane-spanning segment. The Extracellular portion of the chain corresponds to 206 to 228 (WQYFVGKRTVPPGECFIQFLSEP). A helical membrane pass occupies residues 229 to 251 (TITFGTAIAAFYMPVTIMTILYW). The Cytoplasmic segment spans residues 252-490 (RIYKETEKRT…SLIKEKKAAQ (239 aa)). The Basolateral sorting signal signature appears at 274–280 (AEAENFV). Disordered stretches follow at residues 275–295 (EAEN…YELQ) and 323–356 (AEQM…EEDI). Over residues 283–295 (TGSSRSCSSYELQ) the composition is skewed to polar residues. Residues 333 to 344 (SDSWNNNDAAAS) show a composition bias toward low complexity. Ser-384 carries the post-translational modification Phosphoserine. The chain crosses the membrane as a helical span at residues 491–513 (TLSAILLAFIITWTPYNIMVLVN). The Extracellular segment spans residues 514–525 (TFCDSCIPKTYW). Cys-516 and Cys-519 are joined by a disulfide. A helical transmembrane segment spans residues 526 to 545 (NLGYWLCYINSTVNPVCYAL). Residues 546–589 (CNKTFRTTFKMLLLCQCDKRKRRKQQYQQRQSVIFHKRVPEQAL) lie on the Cytoplasmic side of the membrane.

This sequence belongs to the G-protein coupled receptor 1 family. Muscarinic acetylcholine receptor subfamily. CHRM3 sub-subfamily. Homodimer; the dimers can form tetramers. Interacts with NALCN. Interacts with TMEM147. Expressed in cerebral cortex, submandibular gland, hypothalamus, pancreas, liver, and ileum.

Its subcellular location is the cell membrane. It is found in the postsynaptic cell membrane. The protein resides in the basolateral cell membrane. It localises to the endoplasmic reticulum membrane. The muscarinic acetylcholine receptor mediates various cellular responses, including inhibition of adenylate cyclase, breakdown of phosphoinositides and modulation of potassium channels through the action of G proteins. Primary transducing effect is Pi turnover. The chain is Muscarinic acetylcholine receptor M3 (Chrm3) from Mus musculus (Mouse).